The primary structure comprises 473 residues: Cysteine protease ATG4A (473 aa).

The segment at 1 to 33 (MTSLPGRGVSPSSSDPLCEGNAAPSSSSSGQDL) is disordered. The active-site Nucleophile is C160. Catalysis depends on residues D357 and H359.

Belongs to the peptidase C54 family. Interacts with ATG8.

It is found in the cytoplasm. It catalyses the reaction [protein]-C-terminal L-amino acid-glycyl-phosphatidylethanolamide + H2O = [protein]-C-terminal L-amino acid-glycine + a 1,2-diacyl-sn-glycero-3-phosphoethanolamine. Cysteine protease that plays a key role in autophagy by mediating both proteolytic activation and delipidation of ATG8 family proteins. The protease activity is required for proteolytic activation of ATG8 family proteins: cleaves the C-terminal amino acid of ATG8 proteins to reveal a C-terminal glycine. Exposure of the glycine at the C-terminus is essential for ATG8 proteins conjugation to phosphatidylethanolamine (PE) and insertion to membranes, which is necessary for autophagy. In addition to the protease activity, also mediates delipidation of PE-conjugated ATG8 proteins. The polypeptide is Cysteine protease ATG4A (ATG4A) (Oryza sativa subsp. indica (Rice)).